The chain runs to 263 residues: Translation initiation factor 2 subunit alpha (263 aa).

The S1 motif domain occupies 12 to 83; sequence GEILIATVKQ…RKGTIDVSLK (72 aa).

It belongs to the eIF-2-alpha family. Heterotrimer composed of an alpha, a beta and a gamma chain.

EIF-2 functions in the early steps of protein synthesis by forming a ternary complex with GTP and initiator tRNA. This Sulfurisphaera tokodaii (strain DSM 16993 / JCM 10545 / NBRC 100140 / 7) (Sulfolobus tokodaii) protein is Translation initiation factor 2 subunit alpha.